Reading from the N-terminus, the 40-residue chain is Dolichyl-diphosphooligosaccharide--protein glycosyltransferase subunit 4 (40 aa).

Residues 1–4 (MITD) are Lumenal-facing. The helical transmembrane segment at 5 to 25 (VQLAIFSNVLGVFLFLLVVAY) threads the bilayer. The Cytoplasmic portion of the chain corresponds to 26-40 (HYINANTGKSSPKAK).

Belongs to the OST4 family. In terms of assembly, component of the oligosaccharyltransferase (OST) complex.

It is found in the endoplasmic reticulum membrane. Its function is as follows. Subunit of the oligosaccharyl transferase (OST) complex that catalyzes the initial transfer of a defined glycan (Glc(3)Man(9)GlcNAc(2) in eukaryotes) from the lipid carrier dolichol-pyrophosphate to an asparagine residue within an Asn-X-Ser/Thr consensus motif in nascent polypeptide chains, the first step in protein N-glycosylation. N-glycosylation occurs cotranslationally and the complex associates with the Sec61 complex at the channel-forming translocon complex that mediates protein translocation across the endoplasmic reticulum (ER). All subunits are required for a maximal enzyme activity. This chain is Dolichyl-diphosphooligosaccharide--protein glycosyltransferase subunit 4, found in Drosophila persimilis (Fruit fly).